A 572-amino-acid polypeptide reads, in one-letter code: Proline--tRNA ligase (572 aa).

It belongs to the class-II aminoacyl-tRNA synthetase family. ProS type 1 subfamily. Homodimer.

It localises to the cytoplasm. The enzyme catalyses tRNA(Pro) + L-proline + ATP = L-prolyl-tRNA(Pro) + AMP + diphosphate. Catalyzes the attachment of proline to tRNA(Pro) in a two-step reaction: proline is first activated by ATP to form Pro-AMP and then transferred to the acceptor end of tRNA(Pro). As ProRS can inadvertently accommodate and process non-cognate amino acids such as alanine and cysteine, to avoid such errors it has two additional distinct editing activities against alanine. One activity is designated as 'pretransfer' editing and involves the tRNA(Pro)-independent hydrolysis of activated Ala-AMP. The other activity is designated 'posttransfer' editing and involves deacylation of mischarged Ala-tRNA(Pro). The misacylated Cys-tRNA(Pro) is not edited by ProRS. This chain is Proline--tRNA ligase, found in Salmonella arizonae (strain ATCC BAA-731 / CDC346-86 / RSK2980).